Consider the following 138-residue polypeptide: Nucleoside diphosphate kinase (138 aa).

Positions 9, 57, 85, 91, 102, and 112 each coordinate ATP. Catalysis depends on H115, which acts as the Pros-phosphohistidine intermediate.

Belongs to the NDK family. As to quaternary structure, homotetramer. The cofactor is Mg(2+).

It localises to the cytoplasm. The enzyme catalyses a 2'-deoxyribonucleoside 5'-diphosphate + ATP = a 2'-deoxyribonucleoside 5'-triphosphate + ADP. It catalyses the reaction a ribonucleoside 5'-diphosphate + ATP = a ribonucleoside 5'-triphosphate + ADP. Its function is as follows. Major role in the synthesis of nucleoside triphosphates other than ATP. The ATP gamma phosphate is transferred to the NDP beta phosphate via a ping-pong mechanism, using a phosphorylated active-site intermediate. In Deinococcus radiodurans (strain ATCC 13939 / DSM 20539 / JCM 16871 / CCUG 27074 / LMG 4051 / NBRC 15346 / NCIMB 9279 / VKM B-1422 / R1), this protein is Nucleoside diphosphate kinase.